Consider the following 496-residue polypeptide: Zinc finger and SCAN domain-containing protein 5C (496 aa).

Residues 1–19 are compositionally biased toward polar residues; sequence MAANCTSSWSLGESCNSPG. The segment at 1–38 is disordered; sequence MAANCTSSWSLGESCNSPGSEPPQSMPSPATQLGNHDS. The SCAN box domain maps to 44–126; it reads HVNFRMFSCP…DLLRNNRRPK (83 aa). Disordered regions lie at residues 149–188 and 203–347; these read EAPASVRDDPRHVSSQRTSSVNQMCPEEGQASQELQTLPR and PETT…HPSG. The span at 161–171 shows a compositional bias: polar residues; that stretch reads VSSQRTSSVNQ. Residues 210–223 are compositionally biased toward basic and acidic residues; sequence GDPKALRPKPTLEK. A compositionally biased stretch (polar residues) spans 234–247; that stretch reads GLTSPEPQLPNSPT. Basic and acidic residues predominate over residues 253–263; that stretch reads KEGKEPQKRAS. C2H2-type zinc fingers lie at residues 356–378, 384–406, 412–434, 440–462, and 468–490; these read FACEVCGKRFKYRGKLAVHTRSH, FQCNLCGKRFMQRIGLQFHQRTH, YTCDICQKQFTQKSYLKCHKRSH, FECKDCKKVFTYKANLKEHQRIH, and HKCSKCPRAFGRPATLRRHQKTH.

It is found in the nucleus. In terms of biological role, may be involved in transcriptional regulation. The chain is Zinc finger and SCAN domain-containing protein 5C from Homo sapiens (Human).